Consider the following 110-residue polypeptide: PTS system oligo-beta-mannoside-specific EIIA component (110 aa).

In terms of domain architecture, PTS EIIA type-3 spans 9-107; it reads LTDEQISFQL…VKEMLDLFKT (99 aa). His83 functions as the Tele-phosphohistidine intermediate in the catalytic mechanism. His83 carries the post-translational modification Phosphohistidine; by HPr.

It localises to the cytoplasm. In terms of biological role, the phosphoenolpyruvate-dependent sugar phosphotransferase system (sugar PTS), a major carbohydrate active transport system, catalyzes the phosphorylation of incoming sugar substrates concomitantly with their translocation across the cell membrane. The enzyme II GmuABC PTS system is involved in the transport of oligo-glucomannans such as cellobiose or mannobiose. The chain is PTS system oligo-beta-mannoside-specific EIIA component from Bacillus subtilis (strain 168).